Consider the following 278-residue polypeptide: Pyrroline-5-carboxylate reductase 2 (278 aa).

It belongs to the pyrroline-5-carboxylate reductase family.

It is found in the cytoplasm. It carries out the reaction L-proline + NADP(+) = (S)-1-pyrroline-5-carboxylate + NADPH + 2 H(+). It catalyses the reaction L-proline + NAD(+) = (S)-1-pyrroline-5-carboxylate + NADH + 2 H(+). It functions in the pathway amino-acid biosynthesis; L-proline biosynthesis; L-proline from L-glutamate 5-semialdehyde: step 1/1. In terms of biological role, catalyzes the reduction of 1-pyrroline-5-carboxylate (PCA) to L-proline. This Bacillus subtilis (strain 168) protein is Pyrroline-5-carboxylate reductase 2 (proI).